The primary structure comprises 205 residues: Endothelial cell-specific chemotaxis regulator (205 aa).

The first 24 residues, 1–24 (MGTAGAMQLCWVILGFLLFRGHNS), serve as a signal peptide directing secretion. Over 25 to 124 (QPTMTQTSSS…TSETVLTVAA (100 aa)) the chain is Extracellular. Composition is skewed to polar residues over residues 49–71 (SSNP…STGT) and 86–101 (SRDT…TTMS). Residues 49 to 101 (SSNPGYIPSSEANRPSHLSSTGTPGAGVPSSGRDGGTSRDTFQTVPPNSTTMS) form a disordered region. A helical transmembrane segment spans residues 125–145 (FGVISFIVILVVVVIILVGVV). The Cytoplasmic segment spans residues 146–205 (SLRFKCRKSKESEDPQKPGSSGLSESCSTANGEKDSITLISMKNINMNNGKQSLSAEKVL). The interval 153-175 (KSKESEDPQKPGSSGLSESCSTA) is disordered. Polar residues predominate over residues 163 to 175 (PGSSGLSESCSTA). Ser-198 carries the phosphoserine modification.

This sequence belongs to the ECSCR family. As to quaternary structure, interacts with FLNA. Interacts with the 20S proteasome subunit PSMA7. Post-translationally, may be heavily O-glycosylated. As to expression, highest expression in endothelial cells. Also detected in vascular smooth muscle, macrophages, lymphocytes, and mast cells.

It localises to the cell membrane. The protein localises to the cytoplasm. Functionally, regulates endothelial chemotaxis and tube formation. Has a role in angiogenesis and apoptosis via modulation of the actin cytoskeleton and facilitation of proteasomal degradation of the apoptosis inhibitors BIRC3/IAP1 and BIRC2/IAP2. This Homo sapiens (Human) protein is Endothelial cell-specific chemotaxis regulator (ECSCR).